The following is a 723-amino-acid chain: Zinc finger CCCH domain-containing protein 11A (723 aa).

C3H1-type zinc fingers lie at residues 2–29, 31–57, and 60–87; these read SKQG…HCEA, LGNE…HMEI, and KRSE…HTKG. Disordered regions lie at residues 142-208, 223-256, 404-428, 450-526, and 565-681; these read ENSE…KQDD, KKQK…EKEN, KRAE…KLEE, EKAL…VKSL, and VKPS…APLS. Positions 160–175 are enriched in acidic residues; that stretch reads ADDDEDDDDQLSEEGE. Positions 376–411 form a coiled coil; it reads KTFSEALAERKQRRLEEEKQKLEEFLTEKRAEGERK. The span at 511–522 shows a compositional bias: polar residues; sequence PSNQSAPNSKAQ. Over residues 609–620 the composition is skewed to low complexity; sequence KKAALTAAPALP. The span at 637–649 shows a compositional bias: polar residues; it reads LELQLGSQADSVE. Residues 650 to 672 are compositionally biased toward low complexity; the sequence is QSGDSSSASASSQSVAKAQQLSS.

It is found in the nucleus speckle. Functionally, through its association with TREX complex components, may participate in the export and post-transcriptional coordination of selected mRNA transcripts. Binds RNA. The polypeptide is Zinc finger CCCH domain-containing protein 11A (ZC3H11A) (Gallus gallus (Chicken)).